The following is a 266-amino-acid chain: Interleukin-1 beta (266 aa).

A propeptide spanning residues 1–113 is cleaved from the precursor; that stretch reads MAPVPEPINE…ETSSDEFLCD (113 aa).

Belongs to the IL-1 family. As to quaternary structure, monomer. In its precursor form, weakly interacts with full-length MEFV; the mature cytokine does not interact at all. Interacts with integrins ITGAV:ITGBV and ITGA5:ITGB1; integrin-binding is required for IL1B signaling. Interacts with cargo receptor TMED10; the interaction is direct and is required for the secretion of IL1B mature form. Interacts with HSP90AB1; the interaction facilitates cargo translocation into the ERGIC. Interacts with HSP90B1; the interaction facilitates cargo translocation into the ERGIC.

The protein resides in the cytoplasm. Its subcellular location is the cytosol. The protein localises to the secreted. It is found in the lysosome. It localises to the extracellular exosome. Potent pro-inflammatory cytokine. Initially discovered as the major endogenous pyrogen, induces prostaglandin synthesis, neutrophil influx and activation, T-cell activation and cytokine production, B-cell activation and antibody production, and fibroblast proliferation and collagen production. Promotes Th17 differentiation of T-cells. Synergizes with IL12/interleukin-12 to induce IFNG synthesis from T-helper 1 (Th1) cells. Plays a role in angiogenesis by inducing VEGF production synergistically with TNF and IL6. Involved in transduction of inflammation downstream of pyroptosis: its mature form is specifically released in the extracellular milieu by passing through the gasdermin-D (GSDMD) pore. The chain is Interleukin-1 beta (IL1B) from Cervus elaphus (Red deer).